Consider the following 383-residue polypeptide: Inactive serine protease 54 (383 aa).

The N-terminal stretch at 1–20 is a signal peptide; sequence MAEMRGMLLMLLYISHSSSA. The Peptidase S1 domain maps to 21-258; sequence ICGIQKATIA…YSDWITAKTR (238 aa). N-linked (GlcNAc...) asparagine glycosylation occurs at Asn113. Intrachain disulfides connect Cys154–Cys216, Cys185–Cys195, and Cys206–Cys237. Residues 305 to 334 form a disordered region; sequence QGQRMSTKSNKQKDAGQNFRVNRQPETSGP. The segment covering 323-334 has biased composition (polar residues); it reads FRVNRQPETSGP.

This sequence belongs to the peptidase S1 family. Plasma kallikrein subfamily.

Its subcellular location is the secreted. This chain is Inactive serine protease 54 (Prss54), found in Mus musculus (Mouse).